The primary structure comprises 121 residues: Large ribosomal subunit protein uL14c (121 aa).

This sequence belongs to the universal ribosomal protein uL14 family. In terms of assembly, part of the 50S ribosomal subunit.

It localises to the plastid. The protein resides in the chloroplast. Binds to 23S rRNA. This chain is Large ribosomal subunit protein uL14c, found in Nephroselmis olivacea (Green alga).